A 337-amino-acid polypeptide reads, in one-letter code: MSIISIAVDAMGGDFAPEAVIGGLDFALTNLLDNKDVSFNIYGQESQVLPMLDKYKNVKEHSLFIDTPDIVLANDKPSFALRKRKSSSMWCAIESIKNGVTSGVVSSGNTGALMAISCFVLGTLPNIKRPAICCALPSKCERYFVILDLGANVDCSANSLFQFAIMGNAFAKAVLNVPNPKVALLNVGEEEVKGTDVIREAFLLLRQAESSINFCGYIEPINMLGGEVDVVVADGFCGNVVLKVAESIAYIFKSVFEKSVSSSIITKIAGLLLKSSMKRNFMKFNPKIYNGAMLVGLNGVVVKSHGNADKIAFAHAVKVAVNAARNNINAKIIHELG.

This sequence belongs to the PlsX family. In terms of assembly, homodimer. Probably interacts with PlsY.

The protein localises to the cytoplasm. It catalyses the reaction a fatty acyl-[ACP] + phosphate = an acyl phosphate + holo-[ACP]. Its pathway is lipid metabolism; phospholipid metabolism. Catalyzes the reversible formation of acyl-phosphate (acyl-PO(4)) from acyl-[acyl-carrier-protein] (acyl-ACP). This enzyme utilizes acyl-ACP as fatty acyl donor, but not acyl-CoA. The protein is Phosphate acyltransferase of Ehrlichia canis (strain Jake).